The following is an 804-amino-acid chain: Ribonucleoside-diphosphate reductase large subunit-like protein (804 aa).

This sequence belongs to the ribonucleoside diphosphate reductase large chain family.

The protein localises to the virion. The protein resides in the host cytoplasm. In terms of biological role, does not possess a ribonucleotide reductase activity. Betaherpesviruses probably use another strategy to expand the dNTP pool in a quiescent host cell. This is Ribonucleoside-diphosphate reductase large subunit-like protein from Homo sapiens (Human).